We begin with the raw amino-acid sequence, 92 residues long: MPLHKSAEKRLRQAARRNERNRARKKELKGVLKNMQKLIDANAAKSEVEAAYKAAVQKLDRLGVKRYIHPNKASRKKAQLTKALNNYTPTAS.

Residues 1–21 are compositionally biased toward basic and acidic residues; it reads MPLHKSAEKRLRQAARRNERN. 2 disordered regions span residues 1–26 and 73–92; these read MPLH…ARKK and ASRK…PTAS. Positions 82-92 are enriched in polar residues; that stretch reads KALNNYTPTAS.

Belongs to the bacterial ribosomal protein bS20 family.

Functionally, binds directly to 16S ribosomal RNA. This is Small ribosomal subunit protein bS20 from Chlorobaculum tepidum (strain ATCC 49652 / DSM 12025 / NBRC 103806 / TLS) (Chlorobium tepidum).